Consider the following 96-residue polypeptide: Cytoplasmic envelopment protein 3 (96 aa).

Residue glycine 2 is the site of N-myristoyl glycine; by host attachment. The short motif at 18 to 19 (LI) is the Di-leucine-like internalization motif element. Residues 37–43 (DIESEEE) form an asp/Glu-rich (acidic) region. Serine 40 carries the post-translational modification Phosphoserine. A disordered region spans residues 44–96 (GNFYVPPDMRGVTRAPGRQRLRSSDPPSRHTHRRTPGGACPATQFPPPMSDSE). The span at 87–96 (QFPPPMSDSE) shows a compositional bias: pro residues.

This sequence belongs to the herpesviridae cytoplasmic envelopment protein 3 family. As to quaternary structure, interacts with cytoplasmic envelopment protein 2; this interaction is essential for the proper localization of each protein to the assembly complex and thus for the production of infectious virus. Interacts with gE (via C-terminus). Interacts with gD (via C-terminus). Interacts with UL56. Post-translationally, myristoylation and palmitoylation (probably on one or more of the nearby cysteines at the N-terminus) enable membrane-binding and Golgi apparatus-specific targeting and are essential for efficient packaging. Phosphorylated. Phosphorylation does not seem to be required for recycling to the host Golgi apparatus. Packaging is selective for underphosphorylated forms.

Its subcellular location is the virion tegument. The protein resides in the virion membrane. It localises to the host cell membrane. It is found in the host Golgi apparatus membrane. Plays an important role in the cytoplasmic envelopment of tegument proteins and capsids during the assembly and egress processes. Also participates in viral entry at the fusion step probably by regulating the core fusion machinery. In Homo sapiens (Human), this protein is Cytoplasmic envelopment protein 3.